Here is a 124-residue protein sequence, read N- to C-terminus: Small ribosomal subunit protein bS6 (124 aa).

The protein belongs to the bacterial ribosomal protein bS6 family.

Binds together with bS18 to 16S ribosomal RNA. The sequence is that of Small ribosomal subunit protein bS6 from Haemophilus ducreyi (strain 35000HP / ATCC 700724).